The primary structure comprises 123 residues: Class I hydrophobin 2 (123 aa).

An N-terminal signal peptide occupies residues 1–16 (MYAYTVIAFLAASVAA). Cystine bridges form between cysteine 35-cysteine 97, cysteine 43-cysteine 91, cysteine 44-cysteine 72, and cysteine 98-cysteine 116.

Belongs to the fungal hydrophobin family.

It localises to the secreted. Its subcellular location is the cell wall. In terms of biological role, aerial growth, conidiation, and dispersal of filamentous fungi in the environment rely upon a capability of their secreting small amphipathic proteins called hydrophobins (HPBs) with low sequence identity. Class I can self-assemble into an outermost layer of rodlet bundles on aerial cell surfaces, conferring cellular hydrophobicity that supports fungal growth, development and dispersal; whereas Class II form highly ordered films at water-air interfaces through intermolecular interactions but contribute nothing to the rodlet structure. HYD1 and HYD2 are required for the structural integrity of the long aerial chains of microconidia. Does not seem to be important for the ability to cause seedling disease. The protein is Class I hydrophobin 2 of Gibberella moniliformis (Maize ear and stalk rot fungus).